Consider the following 196-residue polypeptide: Calcineurin B homologous protein 2 (196 aa).

Gly-2 is lipidated: N-myristoyl glycine. 4 EF-hand domains span residues 26–61 (ASLL…AVNP), 71–106 (FPNG…PKQP), 111–146 (SRMN…MVGV), and 152–187 (QLES…MNIE). A Phosphoserine modification is found at Ser-27. Residues Asp-124, Asp-126, Asp-128, Lys-130, and Glu-135 each coordinate Ca(2+). The Nuclear export signal signature appears at 137–148 (LQVLRLMVGVQV). Residues Asp-165, Asp-167, Asp-169, and Glu-176 each contribute to the Ca(2+) site.

It belongs to the calcineurin regulatory subunit family. CHP subfamily. In terms of assembly, interacts with PPP3CA. Interacts with SLC9A1/NHE1; the interaction occurs in a calcium-dependent manner. Interacts with SLC9A1/NHE1.

The protein resides in the cytoplasm. The protein localises to the nucleus. It localises to the cell membrane. Its function is as follows. Functions as an integral cofactor in cell pH regulation by controlling plasma membrane-type Na(+)/H(+) exchange activity. Binds to and activates SLC9A1/NHE1 in a serum-independent manner, thus increasing pH and protecting cells from serum deprivation-induced death. Also plays a role in the regulation of cell proliferation and tumor growth by increasing the phosphatase activity of PPP3CA in a calcium-dependent manner. Activator of the calcineurin/NFAT signaling pathway. Involved in the cytoplasmic translocation of the transcription factor NFATC3 to the nucleus. This chain is Calcineurin B homologous protein 2 (Chp2), found in Mus musculus (Mouse).